Reading from the N-terminus, the 262-residue chain is 3-methyl-2-oxobutanoate hydroxymethyltransferase (262 aa).

Residues Asp-42 and Asp-81 each coordinate Mg(2+). Residues 42-43, Asp-81, and Lys-110 contribute to the 3-methyl-2-oxobutanoate site; that span reads DS. Glu-112 provides a ligand contact to Mg(2+). Glu-180 serves as the catalytic Proton acceptor.

This sequence belongs to the PanB family. In terms of assembly, homodecamer; pentamer of dimers. It depends on Mg(2+) as a cofactor.

The protein resides in the cytoplasm. It carries out the reaction 3-methyl-2-oxobutanoate + (6R)-5,10-methylene-5,6,7,8-tetrahydrofolate + H2O = 2-dehydropantoate + (6S)-5,6,7,8-tetrahydrofolate. It participates in cofactor biosynthesis; (R)-pantothenate biosynthesis; (R)-pantoate from 3-methyl-2-oxobutanoate: step 1/2. In terms of biological role, catalyzes the reversible reaction in which hydroxymethyl group from 5,10-methylenetetrahydrofolate is transferred onto alpha-ketoisovalerate to form ketopantoate. This chain is 3-methyl-2-oxobutanoate hydroxymethyltransferase, found in Legionella pneumophila subsp. pneumophila (strain Philadelphia 1 / ATCC 33152 / DSM 7513).